The sequence spans 485 residues: FAD-dependent monooxygenase elcH (485 aa).

Positions 1 to 19 (MFTLRSLAILAVFAATALA) are cleaved as a signal peptide. Residues Asp59 and Gly73 each coordinate FAD. 3 N-linked (GlcNAc...) asparagine glycosylation sites follow: Asn126, Asn147, and Asn157.

Belongs to the paxM FAD-dependent monooxygenase family. It depends on FAD as a cofactor.

The protein operates within secondary metabolite biosynthesis. Functionally, FAD-dependent monooxygenase; part of the gene cluster that mediates the biosynthesis of elsinochrome C, a perelyenequinone phytotoxin structurally similar to cercosporin. The first step of elsinochrome C biosynthesis is performed by the polyketide synthase elcA which catalyzes the formation of nor-toralactone. The starter unit acyltransferase (SAT) domain of elcA initiates polyketide extension by the selective utilization of acetyl-CoA, which is elongated to the heptaketide in the beta-ketoacyl synthase (KS) domain by successive condensations with six malonyl units introduced by the malonyl acyltransferase (MAT) domain. The product template (PT) domain catalyzes C4-C9 and C2-C11 aldol cyclizations and dehydrations to a trihydroxynaphthalene, which is thought to be delivered to the thioesterase (TE) domain for product release. The bifunctional enzyme elcB then methylates nor-toralactone to toralactone before conducting an unusual oxidative aromatic ring opening. The next step in perylenequinone biosynthesis is an O-methylation at the nascent OH-6 of the elcB product performed by the O-methyltransferase elcD. The oxidative coupling of the two monomeric naphthol units in perylenequinone biosynthesis is catalyzed by the FAD-dependent monooxygenase elcE and the multicopper oxidase elcG. ElcG might catalyze the first intermolecular coupling in a regio- and stereo-selective manner via a phenol radical coupling mechanism and the elcE could forge the second C-C bond intramolecularly via a hydride transfer mechanism. The fasciclin domain-containing protein elcF might also play a role duting this step. The last piece of the puzzle in the biosynthesis of elsinochrome C is the additional annulation by enolate coupling to afford the dihydrobenzo(ghi)perylenequinone system, catalyzed by the FAD-dependent monooxygenase elcH. In Phaeosphaeria nodorum (strain SN15 / ATCC MYA-4574 / FGSC 10173) (Glume blotch fungus), this protein is FAD-dependent monooxygenase elcH.